Reading from the N-terminus, the 94-residue chain is MTINYQFGDVDDHGAMIRAQAGLLEAEHQAIIRDVLTASDFWGGAGSAACQGFITQLGRNFQVIYEQANAHGQKVQAAGNNMAQTDSAVGSSWA.

Belongs to the WXG100 family. ESAT-6 subfamily. Strongly interacts with EsxK to form a heterodimeric complex under reducing conditions.

The protein resides in the secreted. The sequence is that of ESAT-6-like protein EsxL from Mycobacterium bovis (strain ATCC BAA-935 / AF2122/97).